A 440-amino-acid polypeptide reads, in one-letter code: Long-chain alkane monooxygenase (440 aa).

FMN-binding positions include aspartate 58, 137–138, tyrosine 158, and 227–230; these read SH and AGMS.

Belongs to the NtaA/SnaA/DszA monooxygenase family. As to quaternary structure, homodimer.

It is found in the secreted. It carries out the reaction a long-chain alkane + FMNH2 + O2 = a long chain fatty alcohol + FMN + H2O + H(+). In terms of biological role, involved in the degradation of long-chain alkanes. Converts alkanes ranging from C(15) to C(36) into their corresponding primary alcohols. This is Long-chain alkane monooxygenase from Geobacillus thermodenitrificans (strain NG80-2).